The following is a 281-amino-acid chain: Large ribosomal subunit protein uL2 (281 aa).

Residues 222 to 281 (TVRGSVMNPNDHPHGGGEGRTPIGRKSPVTPWGKKALGVKTRNTKKPSEKLIVRKRNAKK) are disordered.

Belongs to the universal ribosomal protein uL2 family. Part of the 50S ribosomal subunit. Forms a bridge to the 30S subunit in the 70S ribosome.

Its function is as follows. One of the primary rRNA binding proteins. Required for association of the 30S and 50S subunits to form the 70S ribosome, for tRNA binding and peptide bond formation. It has been suggested to have peptidyltransferase activity; this is somewhat controversial. Makes several contacts with the 16S rRNA in the 70S ribosome. This is Large ribosomal subunit protein uL2 from Mesoplasma florum (strain ATCC 33453 / NBRC 100688 / NCTC 11704 / L1) (Acholeplasma florum).